Reading from the N-terminus, the 504-residue chain is MHMVGKRVRTRFAPSPTGYLHVGGLRTALYNYLFAKKMNGDFIIRIEDTDQSRKVEGAQQNLIKTLEWAGLVPDESPVHGGNFGPYLQSERLELYAGYCRQLLEDGTAYYCFATSEELEENRQLQMKQGLQPKYNRKWLPEDMGGSMPRSESEKMLASGAPYVIRMKVPDYVSVWFEDIIRGPIEFDSATIDDQVLMKSDGFPTYHFASVIDDHLMEFTHIIRGEEWLPSMPKHLLLYEFFGWEPPKYAHLPLLLNPDRSKLSKRQGDVAVEDYIQKGYSQEAIINFIALLGWNEGEGCEQEVYSMEQLIDRFSLERVGKAGSIFTIDKLNWLEKQYIKNRPAEKIIETIRPLLQEELSSKETMLDREVITGDDYLRQVIELMRERVGFEHEFVTFSSYFFFEPETWEEEAVKKRWTSDTPALLSEFLPTLEGLPEFTSDAIEAALKAFVEPKGLKAAVLIHPLRILASGVSFGPSLYHMLEVLGREAVLRRIRKGMECITVPA.

A 'HIGH' region motif is present at residues 14-24; the sequence is PSPTGYLHVGG. Residues 261–265 carry the 'KMSKS' region motif; that stretch reads KLSKR. K264 lines the ATP pocket.

The protein belongs to the class-I aminoacyl-tRNA synthetase family. Glutamate--tRNA ligase type 1 subfamily. Monomer.

Its subcellular location is the cytoplasm. The catalysed reaction is tRNA(Glu) + L-glutamate + ATP = L-glutamyl-tRNA(Glu) + AMP + diphosphate. Functionally, catalyzes the attachment of glutamate to tRNA(Glu) in a two-step reaction: glutamate is first activated by ATP to form Glu-AMP and then transferred to the acceptor end of tRNA(Glu). The protein is Glutamate--tRNA ligase of Chlorobium luteolum (strain DSM 273 / BCRC 81028 / 2530) (Pelodictyon luteolum).